The primary structure comprises 152 residues: Nucleoside diphosphate kinase B (152 aa).

The tract at residues M1–K66 is interaction with AKAP13. K12, F60, R88, T94, R105, and N115 together coordinate ATP. The active-site Pros-phosphohistidine intermediate is the H118.

It belongs to the NDK family. Hexamer of two different chains: An and B (A6, A5B, A4B2, A3B3, A2B4, AB5, B6). Interacts with CAPN8. Interacts with AKAP13. Interacts with ITGB1BP1 (via C-terminal domain region). Interacts with BCL2L10. It depends on Mg(2+) as a cofactor.

It localises to the cytoplasm. The protein localises to the cell projection. Its subcellular location is the lamellipodium. The protein resides in the ruffle. It is found in the nucleus. It carries out the reaction a 2'-deoxyribonucleoside 5'-diphosphate + ATP = a 2'-deoxyribonucleoside 5'-triphosphate + ADP. The enzyme catalyses a ribonucleoside 5'-diphosphate + ATP = a ribonucleoside 5'-triphosphate + ADP. The catalysed reaction is ATP + protein L-histidine = ADP + protein N-phospho-L-histidine.. Its function is as follows. Major role in the synthesis of nucleoside triphosphates other than ATP. The ATP gamma phosphate is transferred to the NDP beta phosphate via a ping-pong mechanism, using a phosphorylated active-site intermediate. Negatively regulates Rho activity by interacting with AKAP13/LBC. Acts as a transcriptional activator of the MYC gene; binds DNA non-specifically. Binds to both single-stranded guanine- and cytosine-rich strands within the nuclease hypersensitive element (NHE) III(1) region of the MYC gene promoter. Does not bind to duplex NHE III(1). Has G-quadruplex (G4) DNA-binding activity, which is independent of its nucleotide-binding and kinase activity. Binds both folded and unfolded G4 with similar low nanomolar affinities. Stabilizes folded G4s regardless of whether they are prefolded or not. Exhibits histidine protein kinase activity. In Pongo abelii (Sumatran orangutan), this protein is Nucleoside diphosphate kinase B (NME2).